The chain runs to 486 residues: Kynureninase 1 (486 aa).

Residues 53–72 form a disordered region; the sequence is DLKRTTLDPNQEPEHSPTPS. Pyridoxal 5'-phosphate-binding positions include leucine 146, threonine 147, 174–177, serine 231, aspartate 260, histidine 263, and tyrosine 285; that span reads FPSD. Position 286 is an N6-(pyridoxal phosphate)lysine (lysine 286). Residues tryptophan 326 and asparagine 354 each coordinate pyridoxal 5'-phosphate.

The protein belongs to the kynureninase family. As to quaternary structure, homodimer. The cofactor is pyridoxal 5'-phosphate.

It localises to the cytoplasm. The enzyme catalyses L-kynurenine + H2O = anthranilate + L-alanine + H(+). It carries out the reaction 3-hydroxy-L-kynurenine + H2O = 3-hydroxyanthranilate + L-alanine + H(+). Its pathway is amino-acid degradation; L-kynurenine degradation; L-alanine and anthranilate from L-kynurenine: step 1/1. The protein operates within cofactor biosynthesis; NAD(+) biosynthesis; quinolinate from L-kynurenine: step 2/3. In terms of biological role, catalyzes the cleavage of L-kynurenine (L-Kyn) and L-3-hydroxykynurenine (L-3OHKyn) into anthranilic acid (AA) and 3-hydroxyanthranilic acid (3-OHAA), respectively. The protein is Kynureninase 1 (bna5-1) of Aspergillus clavatus (strain ATCC 1007 / CBS 513.65 / DSM 816 / NCTC 3887 / NRRL 1 / QM 1276 / 107).